A 453-amino-acid chain; its full sequence is Putative folate transporter 2 (453 aa).

Transmembrane regions (helical) follow at residues 41 to 64, 76 to 96, 108 to 126, 132 to 156, 176 to 195, 201 to 220, 241 to 260, 280 to 300, 312 to 330, 346 to 366, and 416 to 437; these read IVVY…YYLF, SLIL…ALIT, PYLF…SLAL, IQAT…EALV, IASK…YFLE, YIFM…CLFL, FINT…YMSG, SFMG…IIVY, TLIF…PIIL, VLSG…PLFI, and LSMY…VPLL.

It belongs to the major facilitator superfamily. Folate-biopterin transporter (TC 2.A.71) family.

The protein resides in the plastid. Its subcellular location is the apicoplast. It is found in the membrane. In terms of biological role, putative folate transporter. Required for sporogony of malaria parasites and host switching. This Plasmodium berghei (strain Anka) protein is Putative folate transporter 2.